A 368-amino-acid chain; its full sequence is Putative zinc metalloprotease Cj1068 (368 aa).

Residue His-36 participates in Zn(2+) binding. Glu-37 is a catalytic residue. His-40 contributes to the Zn(2+) binding site. Transmembrane regions (helical) follow at residues 112–134 (IYIL…IIIG), 291–313 (FTLL…LLPI), and 338–360 (TFEY…ATYN). Residues 126 to 197 (AFFLYIIIGN…LKILINREGK (72 aa)) enclose the PDZ domain.

It belongs to the peptidase M50B family. It depends on Zn(2+) as a cofactor.

It is found in the cell inner membrane. In Campylobacter jejuni subsp. jejuni serotype O:2 (strain ATCC 700819 / NCTC 11168), this protein is Putative zinc metalloprotease Cj1068.